A 287-amino-acid chain; its full sequence is Bifunctional protein FolD (287 aa).

Residues 167–169 and threonine 192 each bind NADP(+); that span reads GRS.

It belongs to the tetrahydrofolate dehydrogenase/cyclohydrolase family. As to quaternary structure, homodimer.

The catalysed reaction is (6R)-5,10-methylene-5,6,7,8-tetrahydrofolate + NADP(+) = (6R)-5,10-methenyltetrahydrofolate + NADPH. It catalyses the reaction (6R)-5,10-methenyltetrahydrofolate + H2O = (6R)-10-formyltetrahydrofolate + H(+). Its pathway is one-carbon metabolism; tetrahydrofolate interconversion. Catalyzes the oxidation of 5,10-methylenetetrahydrofolate to 5,10-methenyltetrahydrofolate and then the hydrolysis of 5,10-methenyltetrahydrofolate to 10-formyltetrahydrofolate. The chain is Bifunctional protein FolD from Sorangium cellulosum (strain So ce56) (Polyangium cellulosum (strain So ce56)).